The primary structure comprises 377 residues: Lipoyl synthase, mitochondrial (377 aa).

The N-terminal 77 residues, 1–77, are a transit peptide targeting the mitochondrion; sequence MFRRGGRILN…LPNGSVHKRL (77 aa). [4Fe-4S] cluster is bound by residues cysteine 107, cysteine 112, cysteine 118, cysteine 138, cysteine 142, cysteine 145, and serine 353. In terms of domain architecture, Radical SAM core spans 123–342; the sequence is DKTRATATIM…RKRAEELGFL (220 aa).

Belongs to the radical SAM superfamily. Lipoyl synthase family. Requires [4Fe-4S] cluster as cofactor.

The protein localises to the mitochondrion. It carries out the reaction [[Fe-S] cluster scaffold protein carrying a second [4Fe-4S](2+) cluster] + N(6)-octanoyl-L-lysyl-[protein] + 2 oxidized [2Fe-2S]-[ferredoxin] + 2 S-adenosyl-L-methionine + 4 H(+) = [[Fe-S] cluster scaffold protein] + N(6)-[(R)-dihydrolipoyl]-L-lysyl-[protein] + 4 Fe(3+) + 2 hydrogen sulfide + 2 5'-deoxyadenosine + 2 L-methionine + 2 reduced [2Fe-2S]-[ferredoxin]. The protein operates within protein modification; protein lipoylation via endogenous pathway; protein N(6)-(lipoyl)lysine from octanoyl-[acyl-carrier-protein]: step 2/2. Functionally, catalyzes the radical-mediated insertion of two sulfur atoms into the C-6 and C-8 positions of the octanoyl moiety bound to the lipoyl domains of lipoate-dependent enzymes, thereby converting the octanoylated domains into lipoylated derivatives. This Schizosaccharomyces japonicus (strain yFS275 / FY16936) (Fission yeast) protein is Lipoyl synthase, mitochondrial.